We begin with the raw amino-acid sequence, 105 residues long: Urease subunit beta (105 aa).

It belongs to the urease beta subunit family. Heterotrimer of UreA (gamma), UreB (beta) and UreC (alpha) subunits. Three heterotrimers associate to form the active enzyme.

It localises to the cytoplasm. It carries out the reaction urea + 2 H2O + H(+) = hydrogencarbonate + 2 NH4(+). It participates in nitrogen metabolism; urea degradation; CO(2) and NH(3) from urea (urease route): step 1/1. This Marinomonas sp. (strain MWYL1) protein is Urease subunit beta.